Here is a 118-residue protein sequence, read N- to C-terminus: T cell receptor gamma variable 8 (118 aa).

A signal peptide spans 1 to 17 (MLLALALLLAFLPPASQ). Positions 18–118 (KSSNLEGRTK…GVYYCATWDR (101 aa)) constitute an Ig-like domain. Cys-41 and Cys-113 are joined by a disulfide.

Gamma-delta TR is a heterodimer composed of a gamma and delta chain; disulfide-linked. The gamma-delta TR is associated with the transmembrane signaling CD3 coreceptor proteins following the stoichiometry: a single gamma-delta TR heterodimer associates with one CD3D-CD3E heterodimer, one CD3G-CD3E heterodimer and one CD247 homodimer forming a stable octameric structure. Upon activation, gamma-delta TR complex associates with FCER1G to initiate intracellular signaling.

It is found in the cell membrane. Its function is as follows. V region of the variable domain of T cell receptor (TR) gamma chain that participates in the antigen recognition. Gamma-delta TRs recognize a variety of self and foreign non-peptide antigens frequently expressed at the epithelial boundaries between the host and external environment, including endogenous lipids presented by MH-like protein CD1D and phosphoantigens presented by butyrophilin-like molecule BTN3A1. Upon antigen recognition induces rapid, innate-like immune responses involved in pathogen clearance and tissue repair. Binding of gamma-delta TR complex to antigen triggers phosphorylation of immunoreceptor tyrosine-based activation motifs (ITAMs) in the CD3 chains by the LCK and FYN kinases, allowing the recruitment, phosphorylation, and activation of ZAP70 that facilitates phosphorylation of the scaffolding proteins LCP2 and LAT. This lead to the formation of a supramolecular signalosome that recruits the phospholipase PLCG1, resulting in calcium mobilization and ERK activation, ultimately leading to T cell expansion and differentiation into effector cells. Gamma-delta TRs are produced through somatic rearrangement of a limited repertoire of variable (V), diversity (D), and joining (J) genes. The potential diversity of gamma-delta TRs is conferred by the unique ability to rearrange (D) genes in tandem and to utilize all three reading frames. The combinatorial diversity is considerably increased by the sequence exonuclease trimming and random nucleotide (N) region additions which occur during the V-(D)-J rearrangements. In Homo sapiens (Human), this protein is T cell receptor gamma variable 8.